The following is a 230-amino-acid chain: Octanoyltransferase (230 aa).

One can recognise a BPL/LPL catalytic domain in the interval 38 to 215; the sequence is AGGADTLLLL…AVCAALDGVL (178 aa). Substrate contacts are provided by residues 76–83, 145–147, and 158–160; these read RGGKITWH, AIG, and GFA. Cys-176 serves as the catalytic Acyl-thioester intermediate.

The protein belongs to the LipB family.

It localises to the cytoplasm. It catalyses the reaction octanoyl-[ACP] + L-lysyl-[protein] = N(6)-octanoyl-L-lysyl-[protein] + holo-[ACP] + H(+). The protein operates within protein modification; protein lipoylation via endogenous pathway; protein N(6)-(lipoyl)lysine from octanoyl-[acyl-carrier-protein]: step 1/2. Catalyzes the transfer of endogenously produced octanoic acid from octanoyl-acyl-carrier-protein onto the lipoyl domains of lipoate-dependent enzymes. Lipoyl-ACP can also act as a substrate although octanoyl-ACP is likely to be the physiological substrate. The protein is Octanoyltransferase of Mycobacterium bovis (strain BCG / Tokyo 172 / ATCC 35737 / TMC 1019).